Reading from the N-terminus, the 424-residue chain is MIENNELYLQTLGQNAKQASYGLASLTGTQKKALLSAIAASLTAKSQAILAANQKDVAAARENGLSEAMIDRLLLDDARLKGVISDIDNVISLNDPVGTELESQLLDNGLRLSRRRVPLGVIGVIYEARPNVTVDIAVLALKTGNAVILRGGKETLNSNMALSEAIREAITEQGLAADSVQLIKSPDRTLVSGLLKLDQFVDMIVPRGGQNLQRLCAEQATIPVILGGIGICHLYMDKDANIAKSIEVIANAKVQRPTVCNALDTVLIHDSLAETALPQLFSNLSAQGVSFYGCEQTKAIADKLGLAISTATDETYGQEWLSLTLGIKVVADIDTAIGHIRRYSSGHSEGILTDNIHASAHFINQVDSAAVYVNASTRFTDGGQFGLGAEVAVSTQKLHARGPMGLEALTTYKWIGLGEYTVRG.

This sequence belongs to the gamma-glutamyl phosphate reductase family.

The protein localises to the cytoplasm. The catalysed reaction is L-glutamate 5-semialdehyde + phosphate + NADP(+) = L-glutamyl 5-phosphate + NADPH + H(+). It functions in the pathway amino-acid biosynthesis; L-proline biosynthesis; L-glutamate 5-semialdehyde from L-glutamate: step 2/2. In terms of biological role, catalyzes the NADPH-dependent reduction of L-glutamate 5-phosphate into L-glutamate 5-semialdehyde and phosphate. The product spontaneously undergoes cyclization to form 1-pyrroline-5-carboxylate. This Shewanella woodyi (strain ATCC 51908 / MS32) protein is Gamma-glutamyl phosphate reductase.